Consider the following 173-residue polypeptide: Crossover junction endodeoxyribonuclease RuvC (173 aa).

Residues D8, E67, and D139 contribute to the active site. Residues D8, E67, and D139 each contribute to the Mg(2+) site.

Belongs to the RuvC family. As to quaternary structure, homodimer which binds Holliday junction (HJ) DNA. The HJ becomes 2-fold symmetrical on binding to RuvC with unstacked arms; it has a different conformation from HJ DNA in complex with RuvA. In the full resolvosome a probable DNA-RuvA(4)-RuvB(12)-RuvC(2) complex forms which resolves the HJ. It depends on Mg(2+) as a cofactor.

The protein localises to the cytoplasm. It catalyses the reaction Endonucleolytic cleavage at a junction such as a reciprocal single-stranded crossover between two homologous DNA duplexes (Holliday junction).. The RuvA-RuvB-RuvC complex processes Holliday junction (HJ) DNA during genetic recombination and DNA repair. Endonuclease that resolves HJ intermediates. Cleaves cruciform DNA by making single-stranded nicks across the HJ at symmetrical positions within the homologous arms, yielding a 5'-phosphate and a 3'-hydroxyl group; requires a central core of homology in the junction. The consensus cleavage sequence is 5'-(A/T)TT(C/G)-3'. Cleavage occurs on the 3'-side of the TT dinucleotide at the point of strand exchange. HJ branch migration catalyzed by RuvA-RuvB allows RuvC to scan DNA until it finds its consensus sequence, where it cleaves and resolves the cruciform DNA. The protein is Crossover junction endodeoxyribonuclease RuvC of Vibrio campbellii (strain ATCC BAA-1116).